A 251-amino-acid chain; its full sequence is Endoglucanase CX (251 aa).

This sequence belongs to the glycosyl hydrolase 9 (cellulase E) family.

It catalyses the reaction Endohydrolysis of (1-&gt;4)-beta-D-glucosidic linkages in cellulose, lichenin and cereal beta-D-glucans.. Functionally, degrades carboxymethylcellulose (CMC). This Prunus persica (Peach) protein is Endoglucanase CX.